We begin with the raw amino-acid sequence, 229 residues long: MAGHDSGNAKRGRSPSFGVFVRKPVERTSAKGTSDGAVDSQAIRIDAAQSWPDDAVEVGAVVDAYGLKGWVKLAAHAGAGRGGDALLKARDWWLQKGAERKFARVTQAKLHGDTVVAHPDGSVDRDTALALRGARVFVRRGDFPALAADEFYWVDLIGLDVVNEAGVALGKIADMIDNGVHSIMRVEYPATGKDGRPKTGERLIPFVGVYVKAVEQAAGRVVVDWEADY.

Residues 1 to 37 (MAGHDSGNAKRGRSPSFGVFVRKPVERTSAKGTSDGA) are disordered. One can recognise a PRC barrel domain in the interval 148–229 (ADEFYWVDLI…RVVVDWEADY (82 aa)).

The protein belongs to the RimM family. Binds ribosomal protein uS19.

It is found in the cytoplasm. Functionally, an accessory protein needed during the final step in the assembly of 30S ribosomal subunit, possibly for assembly of the head region. Essential for efficient processing of 16S rRNA. May be needed both before and after RbfA during the maturation of 16S rRNA. It has affinity for free ribosomal 30S subunits but not for 70S ribosomes. The sequence is that of Ribosome maturation factor RimM from Burkholderia pseudomallei (strain 668).